Reading from the N-terminus, the 183-residue chain is Large ribosomal subunit protein uL22 (183 aa).

A disordered region spans residues 163–183 (KTAAKKQSAKKLKKQKMMYRE). Basic residues predominate over residues 165–183 (AAKKQSAKKLKKQKMMYRE).

The protein belongs to the universal ribosomal protein uL22 family.

This is Large ribosomal subunit protein uL22 (rpl-17) from Pectinaria gouldii (Trumpet worm).